A 352-amino-acid polypeptide reads, in one-letter code: Protein RecA (352 aa).

65–72 (GPESSGKT) is an ATP binding site. Positions 333–352 (VKAAANREPVEEVEEADTDI) are disordered. Residues 343-352 (EEVEEADTDI) show a composition bias toward acidic residues.

It belongs to the RecA family.

The protein localises to the cytoplasm. In terms of biological role, can catalyze the hydrolysis of ATP in the presence of single-stranded DNA, the ATP-dependent uptake of single-stranded DNA by duplex DNA, and the ATP-dependent hybridization of homologous single-stranded DNAs. It interacts with LexA causing its activation and leading to its autocatalytic cleavage. The polypeptide is Protein RecA (Pseudomonas fluorescens).